The following is a 550-amino-acid chain: Hydroxylamine reductase (550 aa).

[2Fe-2S] cluster-binding residues include Cys3, Cys6, Cys18, and Cys25. His249, Glu273, Cys317, Cys405, Cys433, Cys458, Glu492, and Lys494 together coordinate hybrid [4Fe-2O-2S] cluster. Cys405 carries the cysteine persulfide modification.

The protein belongs to the HCP family. It depends on [2Fe-2S] cluster as a cofactor. Requires hybrid [4Fe-2O-2S] cluster as cofactor.

It localises to the cytoplasm. The enzyme catalyses A + NH4(+) + H2O = hydroxylamine + AH2 + H(+). Catalyzes the reduction of hydroxylamine to form NH(3) and H(2)O. This Salmonella agona (strain SL483) protein is Hydroxylamine reductase.